The primary structure comprises 306 residues: 5'-hydroxyaverantin dehydrogenase (306 aa).

NADP(+)-binding residues include S25, I27, Q48, K52, and D73. The active-site Proton donor is the S173. Y187, K191, V220, and T222 together coordinate NADP(+). The Proton acceptor role is filled by Y187. K191 acts as the Lowers pKa of active site Tyr in catalysis.

It belongs to the short-chain dehydrogenases/reductases (SDR) family. Homodimer.

The protein resides in the cytoplasm. The protein localises to the cytosol. The enzyme catalyses (1'S,5'S)-5'-hydroxyaverantin + NAD(+) = (S)-5'-oxoaverantin + NADH + H(+). It catalyses the reaction (1'S,5'R)-5'-hydroxyaverantin + NAD(+) = (S)-5'-oxoaverantin + NADH + 2 H(+). It functions in the pathway mycotoxin biosynthesis. Its function is as follows. 5'-hydroxyaverantin dehydrogenase; part of the fragmented gene cluster that mediates the biosynthesis of dothistromin (DOTH), a polyketide toxin very similar in structure to the aflatoxin precursor, versicolorin B. The first step of the pathway is the conversion of acetate to norsolorinic acid (NOR) and requires the fatty acid synthase subunits hexA and hexB, as well as the polyketide synthase pksA. PksA combines a hexanoyl starter unit and 7 malonyl-CoA extender units to synthesize the precursor NOR. The hexanoyl starter unit is provided to the acyl-carrier protein (ACP) domain by the fungal fatty acid synthase hexA/hexB. The second step is the conversion of NOR to averantin (AVN) and requires the norsolorinic acid ketoreductase nor1, which catalyzes the dehydration of norsolorinic acid to form (1'S)-averantin. The cytochrome P450 monooxygenase avnA then catalyzes the hydroxylation of AVN to 5'hydroxyaverantin (HAVN). The next step is performed by adhA that transforms HAVN to averufin (AVF). Averufin might then be converted to hydroxyversicolorone by cypX and avfA. Hydroxyversicolorone is further converted versiconal hemiacetal acetate (VHA) by moxY. VHA is then the substrate for the versiconal hemiacetal acetate esterase est1 to yield versiconal (VAL). Versicolorin B synthase vbsA then converts VAL to versicolorin B (VERB) by closing the bisfuran ring. Then, the activity of the versicolorin B desaturase verB leads to versicolorin A (VERA). DotB, a predicted chloroperoxidase, may perform epoxidation of the A-ring of VERA. Alternatively, a cytochrome P450, such as cypX or avnA could catalyze this step. It is also possible that another, uncharacterized, cytochrome P450 enzyme is responsible for this step. Opening of the epoxide could potentially be achieved by the epoxide hydrolase epoA. However, epoA seems not to be required for DOTH biosynthesis, but other epoxide hydrolases may have the ability to complement this hydrolysis. Alternatively, opening of the epoxide ring could be achieved non-enzymatically. The next step is the deoxygenation of ring A to yield the 5,8-dihydroxyanthraquinone which is most likely catalyzed by the NADPH dehydrogenase encoded by ver1. The last stages of DOTH biosynthesis are proposed to involve hydroxylation of the bisfuran. OrdB and norB might have oxidative roles here. An alternative possibility is that cytochrome P450 monoogenases such as avnA and cypX might perform these steps in addition to previously proposed steps. The protein is 5'-hydroxyaverantin dehydrogenase of Dothistroma septosporum (strain NZE10 / CBS 128990) (Red band needle blight fungus).